Consider the following 255-residue polypeptide: BPI fold-containing family A member 1 (255 aa).

An N-terminal signal peptide occupies residues 1–19 (MFHIGSLVVLCGLLAPTTA). The important for surfactant activity and antibacterial properties stretch occupies residues 87–92 (LLGSLL). Residues asparagine 157, asparagine 178, and asparagine 205 are each glycosylated (N-linked (GlcNAc...) asparagine). Cysteine 179 and cysteine 223 are joined by a disulfide.

The protein belongs to the BPI/LBP/Plunc superfamily. Plunc family. Monomer. Interacts (via N-terminus) with SCNN1B, a subunit of the heterotrimeric epithelial sodium channel (ENaC); this inhibits proteolytic activation of ENaC. As to expression, expressed in trachea, and at lower levels in nasal epithelium.

It localises to the secreted. Its function is as follows. Lipid-binding protein which shows high specificity for the surfactant phospholipid dipalmitoylphosphatidylcholine (DPPC). Plays a role in the innate immune responses of the upper airways. Reduces the surface tension in secretions from airway epithelia and inhibits the formation of biofilm by pathogenic Gram-negative bacteria, such as P.aeruginosa and K.pneumoniae. Negatively regulates proteolytic cleavage of SCNN1G, an event that is required for activation of the epithelial sodium channel (ENaC), and thereby contributes to airway surface liquid homeostasis and proper clearance of mucus. Plays a role in the airway inflammatory response after exposure to irritants. May attract macrophages and neutrophils. This chain is BPI fold-containing family A member 1 (BPIFA1), found in Bos taurus (Bovine).